Here is a 248-residue protein sequence, read N- to C-terminus: Probable phosphatase VS_II0429 (248 aa).

Zn(2+)-binding residues include histidine 8, histidine 10, histidine 16, histidine 41, glutamate 74, histidine 102, histidine 132, aspartate 194, and histidine 196.

Belongs to the PHP family. Zn(2+) serves as cofactor.

The protein is Probable phosphatase VS_II0429 of Vibrio atlanticus (strain LGP32) (Vibrio splendidus (strain Mel32)).